The chain runs to 901 residues: Protein translocase subunit SecA (901 aa).

ATP-binding positions include Gln-87, 105–109 (GEGKT), and Asp-512. The tract at residues 858–891 (SHQDDDTAAAAALAAQTGDRKVGRNDPCPCGSGK) is disordered. Zn(2+) is bound by residues Cys-885, Cys-887, Cys-896, and His-897.

Belongs to the SecA family. Monomer and homodimer. Part of the essential Sec protein translocation apparatus which comprises SecA, SecYEG and auxiliary proteins SecDF-YajC and YidC. Zn(2+) serves as cofactor.

It is found in the cell inner membrane. Its subcellular location is the cytoplasm. The catalysed reaction is ATP + H2O + cellular proteinSide 1 = ADP + phosphate + cellular proteinSide 2.. Functionally, part of the Sec protein translocase complex. Interacts with the SecYEG preprotein conducting channel. Has a central role in coupling the hydrolysis of ATP to the transfer of proteins into and across the cell membrane, serving both as a receptor for the preprotein-SecB complex and as an ATP-driven molecular motor driving the stepwise translocation of polypeptide chains across the membrane. This is Protein translocase subunit SecA from Escherichia fergusonii (strain ATCC 35469 / DSM 13698 / CCUG 18766 / IAM 14443 / JCM 21226 / LMG 7866 / NBRC 102419 / NCTC 12128 / CDC 0568-73).